Reading from the N-terminus, the 178-residue chain is MPMRSLVTLPDPILREVSKPVEQVDTALQELADDMLETMYHAKGIGLAAIQIGIPLRMLVIDVSGNAEDTQKKPLVIINPEILWLSDERNVYKEGCLSIPDYFAEVERPKRLRVRYQNREGKQKEIEADDLLATCLQHEIDHLDGRLFIDYISRIKRDMVIRKFKKRAKEKNTQEAVL.

Fe cation contacts are provided by Cys-96 and His-138. Glu-139 is a catalytic residue. Position 142 (His-142) interacts with Fe cation.

It belongs to the polypeptide deformylase family. Requires Fe(2+) as cofactor.

It catalyses the reaction N-terminal N-formyl-L-methionyl-[peptide] + H2O = N-terminal L-methionyl-[peptide] + formate. Removes the formyl group from the N-terminal Met of newly synthesized proteins. Requires at least a dipeptide for an efficient rate of reaction. N-terminal L-methionine is a prerequisite for activity but the enzyme has broad specificity at other positions. This is Peptide deformylase from Bartonella tribocorum (strain CIP 105476 / IBS 506).